The following is a 200-amino-acid chain: Holliday junction resolvase RecU (200 aa).

A disordered region spans residues Met1–His25. Residues Arg10–His25 show a composition bias toward polar residues. The Mg(2+) site is built by Thr85, Asp87, Glu100, and Gln119.

It belongs to the RecU family. Mg(2+) is required as a cofactor.

The protein localises to the cytoplasm. The enzyme catalyses Endonucleolytic cleavage at a junction such as a reciprocal single-stranded crossover between two homologous DNA duplexes (Holliday junction).. Functionally, endonuclease that resolves Holliday junction intermediates in genetic recombination. Cleaves mobile four-strand junctions by introducing symmetrical nicks in paired strands. Promotes annealing of linear ssDNA with homologous dsDNA. Required for DNA repair, homologous recombination and chromosome segregation. This Bacillus cereus (strain B4264) protein is Holliday junction resolvase RecU.